The following is a 513-amino-acid chain: ATP synthase subunit alpha (513 aa).

169-176 (GDRQTGKT) is an ATP binding site.

This sequence belongs to the ATPase alpha/beta chains family. In terms of assembly, F-type ATPases have 2 components, CF(1) - the catalytic core - and CF(0) - the membrane proton channel. CF(1) has five subunits: alpha(3), beta(3), gamma(1), delta(1), epsilon(1). CF(0) has three main subunits: a(1), b(2) and c(9-12). The alpha and beta chains form an alternating ring which encloses part of the gamma chain. CF(1) is attached to CF(0) by a central stalk formed by the gamma and epsilon chains, while a peripheral stalk is formed by the delta and b chains.

The protein localises to the cell inner membrane. It catalyses the reaction ATP + H2O + 4 H(+)(in) = ADP + phosphate + 5 H(+)(out). Functionally, produces ATP from ADP in the presence of a proton gradient across the membrane. The alpha chain is a regulatory subunit. The polypeptide is ATP synthase subunit alpha (Enterobacter sp. (strain 638)).